The chain runs to 1047 residues: MACSAEAVFAELHALSNFSFLRGASHPKELVAEAARLGYAALALTDECSLAGVVRAHAEAKTLGFKLIIGSEFRLEDGPKLVLLAMDRRGYGQLAAFITLGRRAAEKGEYRLLRGQLETHPLDQCIAIWLPEDAPDDETGAWLARLFPARCWIGVELFLSGGDGLRLSVLQALGERLGLPLVACNDVHMHARERQPLQDTLTAIRLGRPLAELGYALFPNGERHLRPIEFLARIYPRALLEESLRIAERCRFSLDELRYEYPAELVPDGYTAIAWLRELTRQGMAERWPEGAPDKVRRQVEHELELIGAMAYEPFFLTVHDVVRFARSRGILCQGRGSAANSAVCYCLGITEVDPARLDLLFERFISRERNEPPDIDVDFEHERREEVIQYIYRKYGRHRAALAASLITYRVRSAVRDVARALGFSPSRIDTLARVLDRHGVAETLPERLAEAGLASENPAVRRLLALMQMLVGFPRHLSQHVGGFVIAAEDLSHWVPVENAAMPERTVIQWDKDDLESLGLLKVDVLSLGMLTAIRKALAYVGEGRGRPFTLADVPPEDPAVYEMLQRADSIGVFQVESRAQMSMLPRLRPQSYYDLVIQIAIVRPGPIQGDMVHPYLTRRAGLEPVSYPSPAVEKVLKRTLGVPIFQEQVMQLAMVAAGFTPGEADRLRRAMAAWHRKGGLEPFEKKLMDGMRERGYEERFARQIYRQIRGFGEYGFPESHSASFALLAYVSAWLKCHHPAAFACALLNSQPMGFYGPSQLIQDARRHGVEVRPIDVNHSDWDCTLEPTEIPNPLSLWERVGVRALQTGSNPALRLGLRLVNGFSSAAAQRLSDARRQGPFQSIQDLATRVPLDRRELEALAAADALHGLGGHRHRAFWEAAGVEAPTPLYAEPQFAEAEPLLRKPGEAEDVIADYAAAGASLRRHPLSLLRERLDRRGFRTAEALWQVRNGAIARVAGLVVCRQRPMTANGTTFVTIEDETGQINLIVWPATAQAQRRALLRAHLLAVSGTVQQEEGVLHLVAGRLEDIGKWLDGLVVKSRDFQ.

The protein belongs to the DNA polymerase type-C family. DnaE2 subfamily.

It is found in the cytoplasm. The enzyme catalyses DNA(n) + a 2'-deoxyribonucleoside 5'-triphosphate = DNA(n+1) + diphosphate. Functionally, DNA polymerase involved in damage-induced mutagenesis and translesion synthesis (TLS). It is not the major replicative DNA polymerase. This chain is Error-prone DNA polymerase, found in Methylococcus capsulatus (strain ATCC 33009 / NCIMB 11132 / Bath).